Consider the following 353-residue polypeptide: A-kinase anchor protein 7 isoforms delta and gamma (353 aa).

Basic and acidic residues-rich tracts occupy residues 1–22 (MERPAAGEIDANKCDHLSRGEE) and 66–76 (RSKENRGDRND). Disordered regions lie at residues 1–33 (MERPAAGEIDANKCDHLSRGEEGTGDLETSPVG) and 47–85 (DDCGLPDVPQGNVPQGNPKRSKENRGDRNDHVKKRKKAK). AMP is bound by residues Thr134 and 224–226 (HLT). Residues Thr134 and 224–226 (HLT) each bind CMP. The tract at residues 299–353 (AELVRLSKRLVENAVLKAVQQYLEETQNKKQPGEGNSVKAEEGDRNGDGSDNNRK) is PKA-RII-alpha subunit binding domain. The segment at 300–324 (ELVRLSKRLVENAVLKAVQQYLEET) is RI-alpha-binding. The RII-binding stretch occupies residues 301–314 (LVRLSKRLVENAVL). A disordered region spans residues 321-353 (LEETQNKKQPGEGNSVKAEEGDRNGDGSDNNRK). A compositionally biased stretch (basic and acidic residues) spans 337–353 (KAEEGDRNGDGSDNNRK).

As to quaternary structure, binds cAMP-dependent protein kinase (PKA). Interacts with PRKCA; only the cytoplasmic form is capable of interacting with PRKCA. As to expression, expressed highly in the heart, and moderately in brain, lung, liver, kidney and testis. Hardly detectable in spleen and skeletal muscle. In kidney, isoform Delta is expressed in the principal cells of the IMCD.

It localises to the nucleus. The protein localises to the cytoplasm. The protein resides in the cell membrane. Functionally, probably targets cAMP-dependent protein kinase (PKA) to the cellular membrane or cytoskeletal structures. The membrane-associated form reduces epithelial sodium channel (ENaC) activity, whereas the free cytoplasmic form may negatively regulate ENaC channel feedback inhibition by intracellular sodium. Isoform Delta may be involved in shuttling aquaporin-2 (AQP2) to the plasma membrane. This is A-kinase anchor protein 7 isoforms delta and gamma from Rattus norvegicus (Rat).